A 644-amino-acid polypeptide reads, in one-letter code: Threonine--tRNA ligase (644 aa).

The TGS domain occupies methionine 1–threonine 61. Positions aspartate 242–proline 535 are catalytic. The Zn(2+) site is built by cysteine 335, histidine 386, and histidine 512.

Belongs to the class-II aminoacyl-tRNA synthetase family. In terms of assembly, homodimer. Zn(2+) is required as a cofactor.

It localises to the cytoplasm. The enzyme catalyses tRNA(Thr) + L-threonine + ATP = L-threonyl-tRNA(Thr) + AMP + diphosphate + H(+). In terms of biological role, catalyzes the attachment of threonine to tRNA(Thr) in a two-step reaction: L-threonine is first activated by ATP to form Thr-AMP and then transferred to the acceptor end of tRNA(Thr). Also edits incorrectly charged L-seryl-tRNA(Thr). The sequence is that of Threonine--tRNA ligase from Nitrosococcus oceani (strain ATCC 19707 / BCRC 17464 / JCM 30415 / NCIMB 11848 / C-107).